The following is a 156-amino-acid chain: ATP synthase subunit b (156 aa).

A helical transmembrane segment spans residues 7 to 29 (LFAQMVVFLVLAWFTMKFVWPPL).

The protein belongs to the ATPase B chain family. In terms of assembly, F-type ATPases have 2 components, F(1) - the catalytic core - and F(0) - the membrane proton channel. F(1) has five subunits: alpha(3), beta(3), gamma(1), delta(1), epsilon(1). F(0) has three main subunits: a(1), b(2) and c(10-14). The alpha and beta chains form an alternating ring which encloses part of the gamma chain. F(1) is attached to F(0) by a central stalk formed by the gamma and epsilon chains, while a peripheral stalk is formed by the delta and b chains.

It is found in the cell inner membrane. Functionally, f(1)F(0) ATP synthase produces ATP from ADP in the presence of a proton or sodium gradient. F-type ATPases consist of two structural domains, F(1) containing the extramembraneous catalytic core and F(0) containing the membrane proton channel, linked together by a central stalk and a peripheral stalk. During catalysis, ATP synthesis in the catalytic domain of F(1) is coupled via a rotary mechanism of the central stalk subunits to proton translocation. In terms of biological role, component of the F(0) channel, it forms part of the peripheral stalk, linking F(1) to F(0). This is ATP synthase subunit b from Burkholderia lata (strain ATCC 17760 / DSM 23089 / LMG 22485 / NCIMB 9086 / R18194 / 383).